We begin with the raw amino-acid sequence, 160 residues long: Secreted RxLR effector protein 83 (160 aa).

The signal sequence occupies residues 1–21; sequence MLVLLAATFFIYISRLTSTDA. A RxLR motif is present at residues 27–30; sequence RGLR. Asn-39 and Asn-131 each carry an N-linked (GlcNAc...) asparagine glycan.

Belongs to the RxLR effector family.

The protein localises to the secreted. The protein resides in the host nucleus. It is found in the host cytoplasm. In terms of biological role, secreted effector that completely suppresses the host cell death induced by cell death-inducing proteins. This is Secreted RxLR effector protein 83 from Plasmopara viticola (Downy mildew of grapevine).